We begin with the raw amino-acid sequence, 104 residues long: Large ribosomal subunit protein uL24 (104 aa).

The protein belongs to the universal ribosomal protein uL24 family. In terms of assembly, part of the 50S ribosomal subunit.

One of two assembly initiator proteins, it binds directly to the 5'-end of the 23S rRNA, where it nucleates assembly of the 50S subunit. Its function is as follows. One of the proteins that surrounds the polypeptide exit tunnel on the outside of the subunit. This is Large ribosomal subunit protein uL24 from Shewanella piezotolerans (strain WP3 / JCM 13877).